A 215-amino-acid chain; its full sequence is uncharacterized protein (215 aa).

Residues 1–17 (MKKVLASATILSLMLVG) form the signal peptide. Residues 17–110 (GCSNGGNDES…NKQQQSVQDN (94 aa)) are disordered. The N-palmitoyl cysteine moiety is linked to residue Cys-18. The S-diacylglycerol cysteine moiety is linked to residue Cys-18. Basic and acidic residues predominate over residues 25–69 (ESSHKDDSSKTEQKDKSSSQHDSKKDSKRNDTNNKQDNQENKSNK). Polar residues predominate over residues 70-95 (EQTSNQNSNAGEQRTSERPTTNSNGI). Residues 96 to 110 (SSDNQNKQQQSVQDN) show a composition bias toward low complexity.

The protein localises to the cell membrane. This is an uncharacterized protein from Staphylococcus epidermidis (strain ATCC 12228 / FDA PCI 1200).